We begin with the raw amino-acid sequence, 600 residues long: DDB1- and CUL4-associated factor 15 (600 aa).

Residues 1–29 are disordered; that stretch reads MAPSSKSERNSGAGSAGGGPGGTGGKRAV. The span at 14–27 shows a compositional bias: gly residues; sequence GSAGGGPGGTGGKR. Phosphoserine is present on Ser-50. Residues Cys-193, Cys-196, Cys-211, and His-214 each contribute to the Zn(2+) site. Ser-314 carries the phosphoserine modification. Basic and acidic residues predominate over residues 334-343; sequence AKGSPLEETR. The tract at residues 334 to 384 is disordered; that stretch reads AKGSPLEETRLPSSLGPSSSRCRPSLEPQAPSGEVVPRDSPPAAETTAPEP. Low complexity-rich tracts occupy residues 344-359 and 374-384; these read LPSS…RPSL and PPAAETTAPEP.

Component of the DCX(DCAF15) complex, also named CLR4(DCAF15) complex, composed of DCAF15, DDB1, cullin-4 (CUL4A or CUL4B), DDA1 and RBX1.

Its pathway is protein modification; protein ubiquitination. Its function is as follows. Substrate-recognition component of the DCX(DCAF15) complex, a cullin-4-RING E3 ubiquitin-protein ligase complex that mediates ubiquitination and degradation of target proteins. The DCX(DCAF15) complex acts as a regulator of the natural killer (NK) cells effector functions, possibly by mediating ubiquitination and degradation of cohesin subunits SMC1A and SMC3. May play a role in the activation of antigen-presenting cells (APC) and their interaction with NK cells. The polypeptide is DDB1- and CUL4-associated factor 15 (Mus musculus (Mouse)).